A 335-amino-acid chain; its full sequence is Mycobacterial beta-ketoacyl-[acyl-carrier-protein] synthase III (335 aa).

Active-site residues include C122 and H258. An ACP-binding region spans residues 259 to 263 (QANSR). The active site involves N289.

Belongs to the thiolase-like superfamily. FabH family. In terms of assembly, homodimer.

Its subcellular location is the cytoplasm. The enzyme catalyses malonyl-[ACP] + dodecanoyl-CoA + H(+) = 3-oxotetradecanoyl-[ACP] + CO2 + CoA. It functions in the pathway lipid metabolism; fatty acid biosynthesis. The protein operates within lipid metabolism; mycolic acid biosynthesis. In terms of biological role, catalyzes the condensation reaction of fatty acid synthesis by the addition to an acyl acceptor of two carbons from malonyl-ACP. Catalyzes the first condensation reaction which initiates fatty acid synthesis and may therefore play a role in governing the total rate of fatty acid production. Possesses both acetoacetyl-ACP synthase and acetyl transacylase activities. Its substrate specificity determines the biosynthesis of branched-chain and/or straight-chain of fatty acids. In Mycobacterium ulcerans (strain Agy99), this protein is Mycobacterial beta-ketoacyl-[acyl-carrier-protein] synthase III.